A 182-amino-acid chain; its full sequence is MKMIIAVTFLGIVTIAFAEECRLMQPAANFDAATYFSIPHVYVTHSKNEPKTDVCREYDTSKTDGGSTTVITSNYKIKGQAVNNKVTCTSTGLKNGQTGQFSVVCQPPTGAAVTLTTSVLATDNQNYAILQRCPTSGQGNILVLQTAKEGVNPGVKDFFQKKGWNIDSWFSRTNVNCENIQS.

The first 18 residues, 1-18 (MKMIIAVTFLGIVTIAFA), serve as a signal peptide directing secretion. Disulfide bonds link cysteine 21/cysteine 133, cysteine 55/cysteine 177, and cysteine 88/cysteine 105.

This sequence belongs to the calycin superfamily. Triabin family. Expressed in salivary glands.

The protein localises to the secreted. Its function is as follows. Inhibits platelet aggregation and vasoconstriction through binding to distinct eicosanoids involved in inflammation (acts as a scavenger), and has a role in inhibiting host innate immunity by impairing platelet-assisted formation of neutrophil extracellular traps (NETs). Inhibits platelet aggregation by collagen, and low doses of thromboxane A2 mimetic (TXA2 mimetic), and arachidonic acid (AA) without affecting aggregation induced by ADP, convulxin (GP6 agonist), and PMA. Binds to TXA2, TXB2, prostaglandine H2 mimetic (PGH2 mimetic), PGJ2, and PGF2alpha. Binding is not observed to leukotrienes, AA, and biogenic amines (PGE1, 5(S)-HETE, 12(S)-HETE, 20-HETE, norepinephrine, epinephrine, serotonin, LTC4 and ADP). Induces relaxation of aorta rat previously contracted with TXA2 mimetic. Moreover, it also impairs platelet-assisted formation of neutrophil extracellular traps (NETs). NETs are web-like structures of DNA and proteins that play an important role in killing of pathogens. In addition, NETs are implicated in thrombus formation. In vivo, this protein exhibits antithrombotic activity in two distinct mice models that are highly dependent on platelets. It is noteworthy that it inhibits thrombosis without promoting excessive bleeding. This is Triplatin from Triatoma infestans (Assassin bug).